We begin with the raw amino-acid sequence, 243 residues long: 3-deoxy-manno-octulosonate cytidylyltransferase (243 aa).

Belongs to the KdsB family.

It localises to the cytoplasm. The enzyme catalyses 3-deoxy-alpha-D-manno-oct-2-ulosonate + CTP = CMP-3-deoxy-beta-D-manno-octulosonate + diphosphate. It participates in nucleotide-sugar biosynthesis; CMP-3-deoxy-D-manno-octulosonate biosynthesis; CMP-3-deoxy-D-manno-octulosonate from 3-deoxy-D-manno-octulosonate and CTP: step 1/1. It functions in the pathway bacterial outer membrane biogenesis; lipopolysaccharide biosynthesis. Its function is as follows. Activates KDO (a required 8-carbon sugar) for incorporation into bacterial lipopolysaccharide in Gram-negative bacteria. In Helicobacter acinonychis (strain Sheeba), this protein is 3-deoxy-manno-octulosonate cytidylyltransferase.